The sequence spans 363 residues: RNA polymerase II holoenzyme cyclin-like subunit (363 aa).

Residues 53 to 143 (YQMLRLAKNL…IGECEFWLIS (91 aa)) form the Cyclin N-terminal domain. The tract at residues 252-312 (TPGGSGSPAM…SPQKEKSKLQ (61 aa)) is disordered. Residues 265–276 (IQQNPPNQAYQL) are compositionally biased toward polar residues. Positions 277-298 (TPQQQEMFRQQQMQQQNRQPET) are enriched in low complexity. The segment covering 299 to 310 (QAKDSPQKEKSK) has biased composition (basic and acidic residues).

This sequence belongs to the cyclin family. Cyclin C subfamily. As to quaternary structure, component of the SRB8-11 complex, a regulatory module of the Mediator complex.

The protein resides in the nucleus. Component of the SRB8-11 complex. The SRB8-11 complex is a regulatory module of the Mediator complex which is itself involved in regulation of basal and activated RNA polymerase II-dependent transcription. The SRB8-11 complex may be involved in the transcriptional repression of a subset of genes regulated by Mediator. It may inhibit the association of the Mediator complex with RNA polymerase II to form the holoenzyme complex. The SRB8-11 complex phosphorylates the C-terminal domain (CTD) of the largest subunit of RNA polymerase II. The chain is RNA polymerase II holoenzyme cyclin-like subunit (SSN8) from Pyricularia oryzae (strain 70-15 / ATCC MYA-4617 / FGSC 8958) (Rice blast fungus).